Reading from the N-terminus, the 148-residue chain is Ribonuclease H (148 aa).

Positions 1–142 constitute an RNase H type-1 domain; the sequence is MSDSVEMFTD…ADQLANRGVD (142 aa). Positions 10, 48, 70, and 134 each coordinate Mg(2+).

The protein belongs to the RNase H family. As to quaternary structure, monomer. Mg(2+) serves as cofactor.

It is found in the cytoplasm. It catalyses the reaction Endonucleolytic cleavage to 5'-phosphomonoester.. In terms of biological role, endonuclease that specifically degrades the RNA of RNA-DNA hybrids. The chain is Ribonuclease H from Pseudomonas putida (strain ATCC 700007 / DSM 6899 / JCM 31910 / BCRC 17059 / LMG 24140 / F1).